The sequence spans 238 residues: Uridylate kinase (238 aa).

An ATP-binding site is contributed by 12–15; that stretch reads KLSG. Glycine 54 is a UMP binding site. 2 residues coordinate ATP: glycine 55 and arginine 59. UMP is bound by residues aspartate 74 and 135–142; that span reads TGNPYFTT. The ATP site is built by threonine 162, tyrosine 168, and aspartate 171.

This sequence belongs to the UMP kinase family. In terms of assembly, homohexamer.

It is found in the cytoplasm. It catalyses the reaction UMP + ATP = UDP + ADP. The protein operates within pyrimidine metabolism; CTP biosynthesis via de novo pathway; UDP from UMP (UMPK route): step 1/1. With respect to regulation, inhibited by UTP. Functionally, catalyzes the reversible phosphorylation of UMP to UDP. The protein is Uridylate kinase of Lawsonia intracellularis (strain PHE/MN1-00).